We begin with the raw amino-acid sequence, 189 residues long: GTP cyclohydrolase 1 (189 aa).

Residues cysteine 78, histidine 81, and cysteine 150 each contribute to the Zn(2+) site.

This sequence belongs to the GTP cyclohydrolase I family. Homomer.

It catalyses the reaction GTP + H2O = 7,8-dihydroneopterin 3'-triphosphate + formate + H(+). It participates in cofactor biosynthesis; 7,8-dihydroneopterin triphosphate biosynthesis; 7,8-dihydroneopterin triphosphate from GTP: step 1/1. The chain is GTP cyclohydrolase 1 from Bacillus anthracis (strain A0248).